A 367-amino-acid polypeptide reads, in one-letter code: Protein SGT1 homolog (367 aa).

TPR repeat units follow at residues 6-39 (ASDL…SPAT), 40-73 (AELY…DPSM), and 75-107 (KAYL…ASGD). Positions 165 to 254 (KPKYRHDFYN…AEQITWTSLD (90 aa)) constitute a CS domain. 2 disordered regions span residues 261-289 (AVPQ…DWDK) and 347-367 (VGSK…KWEY). The SGS domain maps to 277–367 (SYPSSKSKKD…DGMELKKWEY (91 aa)).

The protein belongs to the SGT1 family. Interacts (via CS domain) with RAR1 (via CHORD 2 domain). Interacts with RAD6. Expressed in roots, root tips, shoot apical meristem (SAM), young leaves, flag leaves and ears.

It is found in the cytoplasm. The protein localises to the nucleus. Its function is as follows. Involved in basal disease resistance to bacterial blight (X.oryzae). May act as positive regulator of basal defense. Probably required for SCF-mediated ubiquitination, by coupling HSP90 to SCF complex for ubiquitination of HSP90 client proteins. This chain is Protein SGT1 homolog, found in Oryza sativa subsp. japonica (Rice).